A 647-amino-acid chain; its full sequence is Beta-glucosidase-like SFR2, chloroplastic (647 aa).

The disordered stretch occupies residues 116–140 (SAAGDGGSQQSWRSTGGENIGDREQ). Positions 123–132 (SQQSWRSTGG) are enriched in polar residues. N169 carries N-linked (GlcNAc...) asparagine glycosylation. A beta-D-glucoside contacts are provided by residues H258, 302-303 (NE), Y414, E466, W504, 511-512 (EW), and F520. The active-site Proton donor is E303. The Nucleophile role is filled by E466.

Belongs to the glycosyl hydrolase 1 family.

It localises to the plastid. The protein localises to the chloroplast outer membrane. It catalyses the reaction 2 a 1,2-diacyl-3-O-(beta-D-galactosyl)-sn-glycerol = a 1,2-diacyl-3-O-[beta-D-galactosyl-(1-&gt;6)-beta-D-galactosyl]-sn-glycerol + a 1,2-diacyl-sn-glycerol. Functionally, galactosyltransferase synthesizing digalactosyldiacylglycerol from monogalactosyldiacylglycerol in the absence of UDP-galactose. Potentially involved in freezing tolerance. This Oryza sativa subsp. japonica (Rice) protein is Beta-glucosidase-like SFR2, chloroplastic.